The sequence spans 3032 residues: Biorientation of chromosomes in cell division protein 1-like 1 (3032 aa).

Positions 1-31 are enriched in pro residues; the sequence is MATNPQPQPPPPAPPPPPPQPQPPPPPPGPG. Disordered regions lie at residues 1 to 48, 164 to 195, 214 to 397, and 409 to 465; these read MATN…GAGD, EEAA…SANV, NAAR…LDSD, and VHTS…RGVR. Gly residues predominate over residues 32-46; sequence AGPGASGPGSAGAGA. The span at 234-243 shows a compositional bias: polar residues; the sequence is KLSSQPSTDV. The span at 244-261 shows a compositional bias: basic and acidic residues; the sequence is STDKERGSEDATEREKAT. Ser-264 carries the phosphoserine modification. Basic and acidic residues predominate over residues 310–391; it reads TDPKIKSMDK…RAAEGTKEDC (82 aa). Residues 416 to 441 are compositionally biased toward acidic residues; the sequence is SFEEDTEEEVVVSESMEEGEITSEDE. The residue at position 471 (Lys-471) is an N6-acetyllysine. Phosphoserine occurs at positions 480 and 482. Disordered stretches follow at residues 480-1153, 1165-1296, 1309-1366, 1424-1491, 1675-1701, 1740-1858, and 1934-1978; these read SDSD…HKAT, MVDS…HNSN, GGRA…LSED, AAGE…SGRR, GSLS…TEGT, AKPQ…GHAS, and ALAG…ISTG. Basic and acidic residues-rich tracts occupy residues 488-503 and 510-525; these read VEQR…EERL and REKL…EKTK. The residue at position 534 (Lys-534) is an N6-acetyllysine. Composition is skewed to basic and acidic residues over residues 547–568 and 578–653; these read LEPK…EKKV and SRNV…EYKR. A phosphoserine mark is found at Ser-632 and Ser-656. Thr-657 carries the phosphothreonine modification. Basic and acidic residues-rich tracts occupy residues 668–736, 743–768, and 799–846; these read TDTR…DKPS, GDSV…ESVR, and RDGK…KLQK. Residues 848–859 are compositionally biased toward polar residues; sequence ALSSKQHSVTSQ. Composition is skewed to basic and acidic residues over residues 860-872, 934-960, 978-1015, and 1022-1069; these read KRSE…KCET, KPDK…RTSE, AQKD…DGHR, and SNKD…ENRR. Ser-1071 carries the post-translational modification Phosphoserine. Over residues 1086 to 1096 the composition is skewed to polar residues; it reads MSGTTSSSSLQ. The residue at position 1138 (Ser-1138) is a Phosphoserine. A compositionally biased stretch (low complexity) spans 1272–1286; the sequence is STDSDLLSSSGSVTV. Residues 1312-1329 show a composition bias toward polar residues; the sequence is ASTSLANHSDVPNQYSTV. Phosphoserine occurs at positions 1315 and 1364. Composition is skewed to basic and acidic residues over residues 1428-1470 and 1479-1491; these read HVVD…RRDS and GKME…SGRR. Phosphoserine is present on residues Ser-1676 and Ser-1685. Residues 1958–1970 are compositionally biased toward basic and acidic residues; that stretch reads HHSDSQLTRKETV. A phosphoserine mark is found at Ser-1989, Ser-2001, Ser-2092, and Ser-2166. The interval 2082-2101 is disordered; it reads PMPSAVSGENSQLTASRSEE. Polar residues predominate over residues 2088–2097; it reads SGENSQLTAS. Disordered stretches follow at residues 2303–2322, 2370–2469, 2536–2559, and 2575–2596; these read EENQ…LATK, EPSV…HCLT, EGGL…EKMG, and DVTL…PPKG. Phosphoserine is present on residues Ser-2417 and Ser-2443. Residues 2449 to 2459 are compositionally biased toward basic and acidic residues; the sequence is CLREPEQKPAE. At Ser-2554 the chain carries Phosphoserine. Ser-2681 carries the post-translational modification Phosphoserine. The tract at residues 2682 to 3032 is disordered; the sequence is TEALSGCSVE…DENPLKKAKR (351 aa). Composition is skewed to acidic residues over residues 2692–2701 and 2715–2725; these read ADPEEVEEEE and SSEEELDDSPD. Residues 2727–2750 are compositionally biased toward basic and acidic residues; it reads LDSRIETAQRQYSETEPHDTKEEN. A compositionally biased stretch (polar residues) spans 2758 to 2769; that stretch reads SSVTSKTNSSTG. Basic and acidic residues predominate over residues 2782 to 2804; it reads TGEKTEPNEDDGSIKSQEDDHPI. The segment covering 2805–2815 has biased composition (basic residues); it reads IIKRRRGRPRK. The segment at residues 2807–2819 is a DNA-binding region (a.T hook); it reads KRRRGRPRKYPAE. The span at 2822–2832 shows a compositional bias: basic and acidic residues; that stretch reads FKSKEDSKTET. The span at 2833–2843 shows a compositional bias: polar residues; the sequence is DITTVEQSSPS. 2 positions are modified to phosphoserine: Ser-2840 and Ser-2841. Residues 2853–2867 show a composition bias toward basic and acidic residues; the sequence is ESNKEIANLEEKSTS. Position 2888 is a phosphoserine (Ser-2888). A Phosphothreonine modification is found at Thr-2890. Phosphoserine occurs at positions 2892, 2898, and 2907. Residues Lys-2915 and Lys-2916 each participate in a glycyl lysine isopeptide (Lys-Gly) (interchain with G-Cter in ubiquitin) cross-link. Positions 2919–2932 are enriched in acidic residues; that stretch reads ESDEEEEEEEEEEP. Ser-2920 is subject to Phosphoserine. Basic and acidic residues predominate over residues 2975–2987; that stretch reads LAKEKLSTSEKVS. Ser-3000 carries the post-translational modification Phosphoserine. A compositionally biased stretch (basic and acidic residues) spans 3020 to 3032; sequence QKVDENPLKKAKR.

Belongs to the BOD1 family. In terms of assembly, interacts (via COMPASS-Shg1 domain) with SETD1A at stalled replication forks; this interaction mediates FANCD2-dependent nucleosome remodeling at reversed forks protecting them from nucleolytic degradation.

Its subcellular location is the chromosome. Component of the fork protection machinery required to protect stalled/damaged replication forks from uncontrolled DNA2-dependent resection. Acts by stabilizing RAD51 at stalled replication forks and protecting RAD51 nucleofilaments from the antirecombinogenic activities of FBH1 and BLM. Does not regulate spindle orientation. In Mus musculus (Mouse), this protein is Biorientation of chromosomes in cell division protein 1-like 1.